A 108-amino-acid polypeptide reads, in one-letter code: uncharacterized protein (108 aa).

3 helical membrane-spanning segments follow: residues 26–46 (GAVY…ALII), 54–74 (LMTL…PLIF), and 84–104 (INYQ…CIYM).

The protein resides in the cell membrane. This is an uncharacterized protein from Methanocaldococcus jannaschii (strain ATCC 43067 / DSM 2661 / JAL-1 / JCM 10045 / NBRC 100440) (Methanococcus jannaschii).